The chain runs to 113 residues: RING-box protein 2 (113 aa).

The tract at residues 1-26 is disordered; sequence MADVEDGEETCALASHSGSSGSKSGG. Residue Ala-2 is modified to N-acetylalanine. At Thr-10 the chain carries Phosphothreonine; by CK2. Residues Cys-50, Cys-53, Cys-61, Cys-64, Cys-73, Cys-80, His-82, His-85, Cys-87, Cys-88, Cys-99, and Cys-102 each coordinate Zn(2+). Residues 61 to 103 form an RING-type zinc finger; sequence CLRCQAENKQEDCVVVWGECNHSFHNCCMSLWVKQNNRCPLCQ.

Belongs to the RING-box family. In terms of assembly, catalytic component of multiple cullin-5-RING E3 ubiquitin-protein ligase complexes (ECS complexes, also named CRL5 complexes) composed of CUL5, Elongin BC (ELOB and ELOC), RNF7/RBX2 and a variable SOCS box domain-containing protein as substrate-specific recognition component. Also interacts (with lower preference) with CUL1, CUL2, CUL3, CUL4A and CUL4B; additional evidence is however required to confirm this result in vivo. Interacts with UBE2F. Interacts with CSNK2B, the interaction is not affected by phosphorylation by CK2. May also interact with DCUN1D1, DCUN1D2, DCUN1D3, DCUN1D4 and DCUN1D5. (Microbial infection) Following infection by HIV-1 virus, component of a cullin-5-RING E3 ubiquitin-protein ligase complex (ECS complex) hijacked by the HIV-1 Vif protein. Phosphorylation at Thr-10 by CK2 promotes its degradation by the proteasome. As to expression, expressed in heart, liver, skeletal muscle and pancreas. At very low levels expressed in brain, placenta and lung.

It is found in the cytoplasm. The protein resides in the nucleus. The catalysed reaction is S-ubiquitinyl-[E2 ubiquitin-conjugating enzyme]-L-cysteine + [acceptor protein]-L-lysine = [E2 ubiquitin-conjugating enzyme]-L-cysteine + N(6)-ubiquitinyl-[acceptor protein]-L-lysine.. It carries out the reaction S-[NEDD8-protein]-yl-[E2 NEDD8-conjugating enzyme]-L-cysteine + [cullin]-L-lysine = [E2 NEDD8-conjugating enzyme]-L-cysteine + N(6)-[NEDD8-protein]-yl-[cullin]-L-lysine.. It functions in the pathway protein modification; protein ubiquitination. The protein operates within protein modification; protein neddylation. Functionally, catalytic component of multiple cullin-5-RING E3 ubiquitin-protein ligase complexes (ECS complexes), which mediate the ubiquitination and subsequent proteasomal degradation of target proteins. It is thereby involved in various biological processes, such as cell cycle progression, signal transduction and transcription. The functional specificity of the E3 ubiquitin-protein ligase ECS complexes depend on the variable SOCS box-containing substrate recognition component. Within ECS complexes, RNF7/RBX2 recruits the E2 ubiquitination enzyme to the complex via its RING-type and brings it into close proximity to the substrate. Catalytic subunit of various SOCS-containing ECS complexes, such as the ECS(SOCS7) complex, that regulate reelin signaling by mediating ubiquitination and degradation of DAB1. The ECS(SOCS2) complex mediates the ubiquitination and subsequent proteasomal degradation of phosphorylated EPOR and GHR. Promotes ubiquitination and degradation of NF1, thereby regulating Ras protein signal transduction. As part of the ECS(ASB9) complex, catalyzes ubiquitination and degradation of CKB. The ECS(SPSB3) complex catalyzes ubiquitination of nuclear CGAS. As part of the ECS(RAB40C) complex, mediates ANKRD28 ubiquitination and degradation, thereby inhibiting protein phosphatase 6 (PP6) complex activity and focal adhesion assembly during cell migration. As part of some ECS complex, catalyzes 'Lys-11'-linked ubiquitination and degradation of BTRC. ECS complexes and ARIH2 collaborate in tandem to mediate ubiquitination of target proteins; ARIH2 mediating addition of the first ubiquitin on CRLs targets. Specifically catalyzes the neddylation of CUL5 via its interaction with UBE2F. Does not catalyze neddylation of other cullins (CUL1, CUL2, CUL3, CUL4A or CUL4B). May play a role in protecting cells from apoptosis induced by redox agents. Inactive. Its function is as follows. (Microbial infection) Following infection by HIV-1 virus, catalytic component of a cullin-5-RING E3 ubiquitin-protein ligase complex (ECS complex) hijacked by the HIV-1 Vif protein, which catalyzes ubiquitination and degradation of APOBEC3F and APOBEC3G. In Homo sapiens (Human), this protein is RING-box protein 2.